A 541-amino-acid polypeptide reads, in one-letter code: Membrane protein insertase YidC (541 aa).

Helical transmembrane passes span 6–26, 325–345, 349–369, 420–440, 457–477, and 500–520; these read NILLIGLLFVSFLLWQQWQAD, LVVDYGFLWWLAVPIHWLLMF, FVGNWGLAIILITLTVRGLLF, GGCLPIILQMPIFIALYWVLL, LSVQDPYYILPLLMGVSMFVM, and VIFTVFFLWFPAGLVLYWLVG.

This sequence belongs to the OXA1/ALB3/YidC family. Type 1 subfamily. Interacts with the Sec translocase complex via SecD. Specifically interacts with transmembrane segments of nascent integral membrane proteins during membrane integration.

The protein resides in the cell inner membrane. Functionally, required for the insertion and/or proper folding and/or complex formation of integral membrane proteins into the membrane. Involved in integration of membrane proteins that insert both dependently and independently of the Sec translocase complex, as well as at least some lipoproteins. Aids folding of multispanning membrane proteins. This is Membrane protein insertase YidC from Shewanella baltica (strain OS195).